Consider the following 496-residue polypeptide: Fusarielin biosynthesis cluster transcription factor FSL7 (496 aa).

A DNA-binding region (zn(2)-C6 fungal-type) is located at residues 16 to 46 (CDRCHELKIRCTRTGGTESRCDRCEKNDIDC). 5 disordered regions span residues 57-102 (PKSQ…SINS), 189-224 (RSIN…EDQM), 281-307 (ANHT…QSRS), 348-379 (GSTS…KPRT), and 444-470 (MTRE…AQAA). 2 stretches are compositionally biased toward polar residues: residues 65–89 (GPNT…QEQM) and 207–218 (ELQSTQSASGSP). The segment covering 281–294 (ANHTSSSSSSNSTT) has biased composition (low complexity). Over residues 355–379 (YNDTTAHPSSASLPSQTGGPTKPRT) the composition is skewed to polar residues. The span at 444–460 (MTREQHVSTGHGPDRHT) shows a compositional bias: basic and acidic residues.

The protein resides in the nucleus. In terms of biological role, transcription regulator that specifically up-regulates the gene cluster that mediates the biosynthesis of fusarielins F, G and H, decaketide compounds with 5 methylations and a decaline core that act as mycoestrogens as they stimulate growth of MCF-7 breast cancer cells. Probably binds the 5'-CGGNNNCCG-3' motif present in the promoter of all the cluster genes. This chain is Fusarielin biosynthesis cluster transcription factor FSL7, found in Gibberella zeae (strain ATCC MYA-4620 / CBS 123657 / FGSC 9075 / NRRL 31084 / PH-1) (Wheat head blight fungus).